The chain runs to 289 residues: MKKLGFTRSSRRCSQPQEREQESERSRRRLRRRLSEGLLLLVALTVSGGLAAVLTPTPQVAVADEDSSALLRTGKQLFDTSCVSCHGANLQGVPDHGPSLIGVGEAAVYFQVSTGRMPAMRGEAQVARKDPIFNESQIDAIGAYIQANGGGPTVARNPDGSVAMQSLRGTDLGRGGDLFRLNCASCHNFTGKGGALSSGKYAPDLGPANEQQILTAMLTGPQNMPKFADRQLSFEAKKDIIGYVRTVIEERQPGGYSLGGFGPAPEGMAIWIIGMVTAIGLALWIGARA.

Residues 1-11 (MKKLGFTRSSR) show a composition bias toward basic residues. Residues 1–28 (MKKLGFTRSSRRCSQPQEREQESERSRR) form a disordered region. A helical transmembrane segment spans residues 37-55 (GLLLLVALTVSGGLAAVLT). Cytochrome c domains are found at residues 69–149 (ALLR…QANG) and 170–248 (TDLG…RTVI). Positions 82, 85, 86, 183, 186, and 187 each coordinate heme c. Residues 267–287 (GMAIWIIGMVTAIGLALWIGA) form a helical membrane-spanning segment.

The cytochrome bc1 complex is composed of a cytochrome b (QcrB), the Rieske iron-sulfur protein (QcrA) and a diheme cytochrome c (QcrC) subunit. Post-translationally, binds 2 heme c groups covalently per subunit.

The protein localises to the cell membrane. The enzyme catalyses a quinol + 2 Fe(III)-[cytochrome c](out) = a quinone + 2 Fe(II)-[cytochrome c](out) + 2 H(+)(out). Its function is as follows. Cytochrome b subunit of the cytochrome bc1 complex, an essential component of the respiratory electron transport chain required for ATP synthesis. The bc1 complex catalyzes the oxidation of ubiquinol and the reduction of cytochrome c in the respiratory chain. The bc1 complex operates through a Q-cycle mechanism that couples electron transfer to generation of the proton gradient that drives ATP synthesis. This chain is Cytochrome bc1 complex cytochrome c subunit (qcrC), found in Mycobacterium leprae (strain TN).